The primary structure comprises 598 residues: Arginine--tRNA ligase (598 aa).

The 'HIGH' region signature appears at 140 to 150 (ANPTGPLHVGH).

It belongs to the class-I aminoacyl-tRNA synthetase family. In terms of assembly, monomer.

It is found in the cytoplasm. The enzyme catalyses tRNA(Arg) + L-arginine + ATP = L-arginyl-tRNA(Arg) + AMP + diphosphate. The polypeptide is Arginine--tRNA ligase (Synechococcus sp. (strain JA-3-3Ab) (Cyanobacteria bacterium Yellowstone A-Prime)).